Reading from the N-terminus, the 984-residue chain is Lateral signaling target protein 2 homolog (984 aa).

Disordered regions lie at residues Pro308–Glu462, Tyr508–Ser527, Arg539–Ser642, and Asp749–Ala900. Composition is skewed to low complexity over residues Thr326–Thr356, Asn369–Asn380, Thr387–Ala404, and Pro412–Trp433. Residues Ser434–Glu462 show a composition bias toward acidic residues. Residues Ser544 and Ser545 each carry the phosphoserine modification. A compositionally biased stretch (basic residues) spans Arg571–Arg611. Residues Leu630–Ser642 are compositionally biased toward low complexity. Polar residues-rich tracts occupy residues Ala760 to Leu779 and Ser789 to Leu806. A Phosphoserine modification is found at Ser805. 2 stretches are compositionally biased toward low complexity: residues Ala811–Ala869 and Pro886–Pro899. Residues Asp904–Val964 form an FYVE-type zinc finger. 8 residues coordinate Zn(2+): Cys910, Cys913, Cys926, Cys929, Cys934, Cys937, Cys956, and Cys959.

The protein belongs to the lst-2 family.

Its function is as follows. Negative regulator of epidermal growth factor receptor (EGFR) signaling. The polypeptide is Lateral signaling target protein 2 homolog (Drosophila yakuba (Fruit fly)).